A 730-amino-acid chain; its full sequence is Arginine decarboxylase 1B, chloroplastic (730 aa).

The transit peptide at 1–37 (MPALGCCVDAAVSPPPGYSFLWDSSLPAPEIFPSGVP) directs the protein to the chloroplast. Residue lysine 157 is modified to N6-(pyridoxal phosphate)lysine. Residues serine 309, glycine 346, and 395 to 398 (ESGR) contribute to the pyridoxal 5'-phosphate site. A substrate-binding site is contributed by 460 to 461 (YA). Cysteine 548 serves as the catalytic Proton donor; shared with dimeric partner. Aspartate 549 lines the substrate pocket. Tyrosine 590 contributes to the pyridoxal 5'-phosphate binding site.

The protein belongs to the Orn/Lys/Arg decarboxylase class-II family. SpeA subfamily. The cofactor is Mg(2+). Requires pyridoxal 5'-phosphate as cofactor.

It is found in the plastid. Its subcellular location is the chloroplast. It catalyses the reaction L-arginine + H(+) = agmatine + CO2. Its pathway is alkaloid biosynthesis; nicotine biosynthesis. It participates in amine and polyamine biosynthesis; agmatine biosynthesis; agmatine from L-arginine: step 1/1. In terms of biological role, involved in the biosynthesis of pyridine alkaloid natural products, leading mainly to the production of anabasine, anatabine, nicotine and nornicotine, effective deterrents against herbivores with antiparasitic and pesticide properties (neurotoxins); nornicotine serves as the precursor in the synthesis of the carcinogen compound N'-nitrosonornicotine (NNN). Required for the biosynthesis of putrescine. Catalyzes the first step of polyamine (PA) biosynthesis to produce putrescine from arginine. The polypeptide is Arginine decarboxylase 1B, chloroplastic (Nicotiana tabacum (Common tobacco)).